A 266-amino-acid chain; its full sequence is uncharacterized protein (266 aa).

It belongs to the chlamydial CPn_0087/CT_309/TC_0583 family.

This is an uncharacterized protein from Chlamydia trachomatis serovar D (strain ATCC VR-885 / DSM 19411 / UW-3/Cx).